The primary structure comprises 29 residues: Small toxic protein TisB (29 aa).

The helical transmembrane segment at 6–28 (IAILILKLIVAALQLLDAVLKYL) threads the bilayer.

It is found in the cell inner membrane. Functionally, toxic component of a type I toxin-antitoxin (TA) system. Overexpression causes cessation of growth, induces stress-response, a number of membrane protein genes, and leads to cell death. Inhibits ATP synthesis, ATP levels drop drastically quickly after induction. Part of the programmed response to DNA damage; damage leads to increased accumulation of the protein which slows or stops bacterial growth, probably allowing DNA repair before cells continue to grow. The polypeptide is Small toxic protein TisB (tisB) (Escherichia coli (strain K12)).